Here is a 468-residue protein sequence, read N- to C-terminus: uncharacterized protein (468 aa).

12 helical membrane-spanning segments follow: residues 13 to 33, 40 to 60, 76 to 96, 112 to 132, 141 to 161, 194 to 214, 237 to 257, 260 to 280, 328 to 348, 354 to 374, 414 to 434, and 443 to 463; these read LEAFSPIIVMLLLLGLGYALF, LMIISTVFAGFLVFKLGHCYL, ALLILITVGLLIGTWISGGTI, LYVTALFLTAIVSICTGTSWG, FMGVAIGLDANLAATAGAVVA, LLYTTLPSFILSATVYVVYGL, VYHFNFLLLIPVAIVLWGSIT, PTIPVMLLSAFIAIINAILIQ, CFCALSFAGVLQLSGALTVII, FVHSTLSLIITTILCGLTMIG, IIEPILPWTAAGAYMAGTLGV, and AILCWSGIIFAIIYGASGIGI.

This sequence belongs to the NhaC Na(+)/H(+) (TC 2.A.35) antiporter family.

It is found in the cell membrane. This is an uncharacterized protein from Haemophilus influenzae (strain ATCC 51907 / DSM 11121 / KW20 / Rd).